A 729-amino-acid polypeptide reads, in one-letter code: DNA topoisomerase 3 (729 aa).

One can recognise a Toprim domain in the interval 3-136 (KSVVIAEKPS…IKRLWISSVT (134 aa)). The Mg(2+) site is built by glutamate 9 and aspartate 105. The Topo IA-type catalytic domain maps to 153–594 (YDNLYASAVA…EMKNYTKEIV (442 aa)). Residues 187-192 (NCGRVQ) are interaction with DNA. The active-site O-(5'-phospho-DNA)-tyrosine intermediate is tyrosine 310. Positions 686–713 (ERRKKESGNKADKRDVQKYMKQQKKEEE) are enriched in basic and acidic residues. Residues 686 to 718 (ERRKKESGNKADKRDVQKYMKQQKKEEEPLNNP) are disordered.

The protein belongs to the type IA topoisomerase family. The cofactor is Mg(2+).

It carries out the reaction ATP-independent breakage of single-stranded DNA, followed by passage and rejoining.. In terms of biological role, releases the supercoiling and torsional tension of DNA, which is introduced during the DNA replication and transcription, by transiently cleaving and rejoining one strand of the DNA duplex. Introduces a single-strand break via transesterification at a target site in duplex DNA. The scissile phosphodiester is attacked by the catalytic tyrosine of the enzyme, resulting in the formation of a DNA-(5'-phosphotyrosyl)-enzyme intermediate and the expulsion of a 3'-OH DNA strand. The free DNA strand then undergoes passage around the unbroken strand, thus removing DNA supercoils. Finally, in the religation step, the DNA 3'-OH attacks the covalent intermediate to expel the active-site tyrosine and restore the DNA phosphodiester backbone. The chain is DNA topoisomerase 3 from Bacillus thuringiensis subsp. konkukian (strain 97-27).